Consider the following 345-residue polypeptide: Heat stress transcription factor A-4c (345 aa).

A DNA-binding region spans residues 11–105 (LPPFLTKTYE…LMKNIHRRKP (95 aa)). Residues 119–185 (PLTESERRSM…SIVAYVSQVL (67 aa)) are hydrophobic repeat HR-A/B. A Nuclear localization signal motif is present at residues 199-203 (RRKRR). The AHA1 signature appears at 226 to 235 (LTFWENLVSE). The interval 240-329 (SGLQSSSMDH…NGNKIGNQRT (90 aa)) is disordered. The span at 274–283 (PPVTVTAPAP) shows a compositional bias: low complexity. The AHA2 motif lies at 289 to 298 (DDFWEQCLTE). Composition is skewed to polar residues over residues 296-308 (LTEN…QQEV) and 317-329 (NDNN…NQRT).

This sequence belongs to the HSF family. Class A subfamily. Homotrimer. Exhibits temperature-dependent phosphorylation. As to expression, expressed in roots, seedlings and at lower levels in leaves.

The protein resides in the nucleus. Functionally, transcriptional activator that specifically binds DNA sequence 5'-AGAAnnTTCT-3' known as heat shock promoter elements (HSE). May be involved in general response to auxin. The chain is Heat stress transcription factor A-4c (HSFA4C) from Arabidopsis thaliana (Mouse-ear cress).